Here is an 87-residue protein sequence, read N- to C-terminus: MVKKAFISVISQEENRGSVEFQVVSFTNKIRRLTSHLEFHRKDFLSQRGLRKILGKRQRLLSYLSKKDKVRYTELISQLDIRELTTR.

Belongs to the universal ribosomal protein uS15 family. In terms of assembly, part of the 30S ribosomal subunit.

It is found in the plastid. It localises to the chloroplast. This chain is Small ribosomal subunit protein uS15c (rps15), found in Oenothera biennis (German evening primrose).